Here is a 206-residue protein sequence, read N- to C-terminus: FMN-dependent NADH:quinone oxidoreductase (206 aa).

FMN is bound by residues Ser10, 16–18 (SSS), 93–96 (MYNF), and 137–140 (TRGG).

Belongs to the azoreductase type 1 family. As to quaternary structure, homodimer. FMN is required as a cofactor.

The catalysed reaction is 2 a quinone + NADH + H(+) = 2 a 1,4-benzosemiquinone + NAD(+). It carries out the reaction N,N-dimethyl-1,4-phenylenediamine + anthranilate + 2 NAD(+) = 2-(4-dimethylaminophenyl)diazenylbenzoate + 2 NADH + 2 H(+). Its function is as follows. Quinone reductase that provides resistance to thiol-specific stress caused by electrophilic quinones. Functionally, also exhibits azoreductase activity. Catalyzes the reductive cleavage of the azo bond in aromatic azo compounds to the corresponding amines. The polypeptide is FMN-dependent NADH:quinone oxidoreductase (Psychromonas ingrahamii (strain DSM 17664 / CCUG 51855 / 37)).